A 219-amino-acid polypeptide reads, in one-letter code: Trafficking protein particle complex subunit 4 (219 aa).

This sequence belongs to the TRAPP small subunits family. TRAPPC4 subfamily. As to quaternary structure, component of the multisubunit TRAPP (transport protein particle) complex, which includes at least TRAPPC2, TRAPPC2L, TRAPPC3, TRAPPC3L, TRAPPC4, TRAPPC5, TRAPPC8, TRAPPC9, TRAPPC10, TRAPPC11 and TRAPPC12. Interacts with SDC2.

The protein localises to the postsynaptic cell membrane. The protein resides in the golgi apparatus membrane. It is found in the endoplasmic reticulum. Its subcellular location is the vesicle. In terms of biological role, core component of the TRAPP complexes which has a function of guanine nucleotide exchange factor activity for Rab1 GTPase. Plays a role in vesicular transport from endoplasmic reticulum to Golgi and autophagy. May play a role in dendrite postsynaptic membrane trafficking. The sequence is that of Trafficking protein particle complex subunit 4 from Homo sapiens (Human).